Reading from the N-terminus, the 155-residue chain is Molybdopterin synthase catalytic subunit 2 (155 aa).

Residues 101-102 (HR), lysine 117, and 124-126 (KKE) each bind substrate.

Belongs to the MoaE family. MOCS2B subfamily. As to quaternary structure, heterotetramer; composed of 2 small (MOCS2A) and 2 large (MOCS2B) subunits.

The protein resides in the cytoplasm. The enzyme catalyses 2 [molybdopterin-synthase sulfur-carrier protein]-C-terminal-Gly-aminoethanethioate + cyclic pyranopterin phosphate + H2O = molybdopterin + 2 [molybdopterin-synthase sulfur-carrier protein]-C-terminal Gly-Gly + 2 H(+). It functions in the pathway cofactor biosynthesis; molybdopterin biosynthesis. In terms of biological role, catalytic subunit of the molybdopterin synthase complex, a complex that catalyzes the conversion of precursor Z into molybdopterin. Acts by mediating the incorporation of 2 sulfur atoms from thiocarboxylated MOCS2A into precursor Z to generate a dithiolene group. The chain is Molybdopterin synthase catalytic subunit 2 from Aedes aegypti (Yellowfever mosquito).